The chain runs to 318 residues: Potassium channel subfamily K member 15 (318 aa).

At 1 to 8 (MRKQSART) the chain is on the cytoplasmic side. Residues 9–29 (AALILCILSYLLVGAAVFDAL) form a helical membrane-spanning segment. The pore-forming intramembrane region spans 80-101 (FAGSFYFAITVITTIGYGHAAP). A helical transmembrane segment spans residues 108–128 (VFCMFYALLGIPLTLVTFQSL). The Cytoplasmic portion of the chain corresponds to 129–158 (GERLNALVRCLLLAAKRCLGLRRPHVSAEN). The chain crosses the membrane as a helical span at residues 159–179 (MVVAGLLLCAATLALGAAAFA). The pore-forming intramembrane region spans 189–209 (AYYYCFITLTTIGFGDFVALQ). A helical transmembrane segment spans residues 223–243 (FSFLYILLGLTVIGAFLNLVV). The Cytoplasmic segment spans residues 244 to 318 (LRFLASAEAP…DRLRARRKSI (75 aa)). Residues 296–318 (LSPEAVHDCHSSPDRLRARRKSI) form a disordered region. Residues 300–311 (AVHDCHSSPDRL) are compositionally biased toward basic and acidic residues.

It belongs to the two pore domain potassium channel (TC 1.A.1.8) family. In terms of assembly, heterodimer. Post-translationally, phosphorylated. As to expression, brain-specific. Highly expressed in auditory nuclei, in Purkinje cells and in olfactory bulb mitral cells.

Its subcellular location is the membrane. Probable potassium channel subunit. No channel activity observed in heterologous systems. May need to associate with another protein to form a functional channel. The chain is Potassium channel subfamily K member 15 (Kcnk15) from Rattus norvegicus (Rat).